The following is a 143-amino-acid chain: Large ribosomal subunit protein uL15 (143 aa).

Positions 1–52 (MKLNTLAPAAGSKSAPKRLGRGIGSGLGKTSGKGHKGQKARSGGYHKVGFEG) are disordered. Over residues 21–31 (RGIGSGLGKTS) the composition is skewed to gly residues.

Belongs to the universal ribosomal protein uL15 family. In terms of assembly, part of the 50S ribosomal subunit.

Binds to the 23S rRNA. The chain is Large ribosomal subunit protein uL15 from Francisella tularensis subsp. tularensis (strain FSC 198).